Here is a 135-residue protein sequence, read N- to C-terminus: ATP synthase epsilon chain (135 aa).

The protein belongs to the ATPase epsilon chain family. In terms of assembly, F-type ATPases have 2 components, CF(1) - the catalytic core - and CF(0) - the membrane proton channel. CF(1) has five subunits: alpha(3), beta(3), gamma(1), delta(1), epsilon(1). CF(0) has three main subunits: a, b and c.

Its subcellular location is the cell inner membrane. Produces ATP from ADP in the presence of a proton gradient across the membrane. The chain is ATP synthase epsilon chain from Rhodopseudomonas palustris (strain ATCC BAA-98 / CGA009).